A 199-amino-acid polypeptide reads, in one-letter code: Recombination protein RecR (199 aa).

A C4-type zinc finger spans residues 58-73 (CSRCFYFTEEDPCPLC). One can recognise a Toprim domain in the interval 81 to 176 (QLICVVEEPQ…KVTRLAHGIP (96 aa)).

Belongs to the RecR family.

In terms of biological role, may play a role in DNA repair. It seems to be involved in an RecBC-independent recombinational process of DNA repair. It may act with RecF and RecO. The polypeptide is Recombination protein RecR (Syntrophotalea carbinolica (strain DSM 2380 / NBRC 103641 / GraBd1) (Pelobacter carbinolicus)).